We begin with the raw amino-acid sequence, 167 residues long: Claudin domain-containing protein 2 (167 aa).

A run of 4 helical transmembrane segments spans residues 13-32 (LLNL…NYWT), 61-81 (VSAA…GIGI), 96-116 (TIVL…VYTS), and 130-150 (YFFG…FLLA).

Belongs to the PMP-22/EMP/MP20 family.

It localises to the membrane. The sequence is that of Claudin domain-containing protein 2 (Cldnd2) from Mus musculus (Mouse).